Reading from the N-terminus, the 758-residue chain is 5-methyltetrahydropteroyltriglutamate--homocysteine methyltransferase (758 aa).

5-methyltetrahydropteroyltri-L-glutamate-binding positions include 17–20 and Lys-117; that span reads RELK. Residues 434–436 and Glu-487 contribute to the L-homocysteine site; that span reads IGS. L-methionine contacts are provided by residues 434 to 436 and Glu-487; that span reads IGS. 5-methyltetrahydropteroyltri-L-glutamate is bound by residues 518 to 519 and Trp-564; that span reads RC. Asp-602 lines the L-homocysteine pocket. An L-methionine-binding site is contributed by Asp-602. Glu-608 is a binding site for 5-methyltetrahydropteroyltri-L-glutamate. Residues His-644, Cys-646, and Glu-668 each coordinate Zn(2+). The active-site Proton donor is His-697. Cys-729 lines the Zn(2+) pocket.

The protein belongs to the vitamin-B12 independent methionine synthase family. It depends on Zn(2+) as a cofactor.

It carries out the reaction 5-methyltetrahydropteroyltri-L-glutamate + L-homocysteine = tetrahydropteroyltri-L-glutamate + L-methionine. It participates in amino-acid biosynthesis; L-methionine biosynthesis via de novo pathway; L-methionine from L-homocysteine (MetE route): step 1/1. In terms of biological role, catalyzes the transfer of a methyl group from 5-methyltetrahydrofolate to homocysteine resulting in methionine formation. The chain is 5-methyltetrahydropteroyltriglutamate--homocysteine methyltransferase from Yersinia pestis (strain Pestoides F).